The chain runs to 345 residues: Nicotinate-nucleotide--dimethylbenzimidazole phosphoribosyltransferase (345 aa).

Catalysis depends on glutamate 312, which acts as the Proton acceptor.

The protein belongs to the CobT family.

It carries out the reaction 5,6-dimethylbenzimidazole + nicotinate beta-D-ribonucleotide = alpha-ribazole 5'-phosphate + nicotinate + H(+). Its pathway is nucleoside biosynthesis; alpha-ribazole biosynthesis; alpha-ribazole from 5,6-dimethylbenzimidazole: step 1/2. Its function is as follows. Catalyzes the synthesis of alpha-ribazole-5'-phosphate from nicotinate mononucleotide (NAMN) and 5,6-dimethylbenzimidazole (DMB). This is Nicotinate-nucleotide--dimethylbenzimidazole phosphoribosyltransferase from Bacteroides fragilis (strain ATCC 25285 / DSM 2151 / CCUG 4856 / JCM 11019 / LMG 10263 / NCTC 9343 / Onslow / VPI 2553 / EN-2).